A 345-amino-acid chain; its full sequence is Phosphoribosylformylglycinamidine cyclo-ligase (345 aa).

This sequence belongs to the AIR synthase family.

It is found in the cytoplasm. It carries out the reaction 2-formamido-N(1)-(5-O-phospho-beta-D-ribosyl)acetamidine + ATP = 5-amino-1-(5-phospho-beta-D-ribosyl)imidazole + ADP + phosphate + H(+). It participates in purine metabolism; IMP biosynthesis via de novo pathway; 5-amino-1-(5-phospho-D-ribosyl)imidazole from N(2)-formyl-N(1)-(5-phospho-D-ribosyl)glycinamide: step 2/2. The polypeptide is Phosphoribosylformylglycinamidine cyclo-ligase (Escherichia coli (strain 55989 / EAEC)).